A 313-amino-acid polypeptide reads, in one-letter code: 18S rRNA aminocarboxypropyltransferase (313 aa).

Residues 1 to 30 form a disordered region; sequence MGKGKNKMHEPKNGRPQRGANGHSSRQNHR. Residues Ser-62, Val-110, Leu-133, and Trp-148 each coordinate S-adenosyl-L-methionine. The segment covering 215 to 228 has biased composition (basic and acidic residues); the sequence is KETQERKSRAKEED. The disordered stretch occupies residues 215–313; sequence KETQERKSRA…SYDPLGNLIR (99 aa). Residues 237–246 are compositionally biased toward polar residues; that stretch reads RRGNGSQSDT. Over residues 247 to 257 the composition is skewed to acidic residues; sequence SESEENSEQSD. 2 positions are modified to phosphoserine: Ser-286 and Ser-289.

This sequence belongs to the TDD superfamily. TSR3 family.

The protein localises to the cytoplasm. It is found in the nucleus. The catalysed reaction is an N(1)-methylpseudouridine in rRNA + S-adenosyl-L-methionine = N(1)-methyl-N(3)-[(3S)-3-amino-3-carboxypropyl]pseudouridine in rRNA + S-methyl-5'-thioadenosine + H(+). It carries out the reaction N(1)-methylpseudouridine(1191) in yeast 18S rRNA + S-adenosyl-L-methionine = N(1)-methyl-N(3)-[(3S)-3-amino-3-carboxypropyl]pseudouridine(1191) in yeast 18S rRNA + S-methyl-5'-thioadenosine + H(+). Functionally, aminocarboxypropyltransferase that catalyzes the aminocarboxypropyl transfer on pseudouridine at position 1191 (Psi1191) in 18S rRNA. It constitutes the last step in biosynthesis of the hypermodified N1-methyl-N3-(3-amino-3-carboxypropyl) pseudouridine (m1acp3-Psi) conserved in eukaryotic 18S rRNA. Required for processing 35S pre-rRNA at site D. In Saccharomyces cerevisiae (strain ATCC 204508 / S288c) (Baker's yeast), this protein is 18S rRNA aminocarboxypropyltransferase.